A 205-amino-acid polypeptide reads, in one-letter code: Meiotic nuclear division protein 1 homolog (205 aa).

Positions 79 to 147 form a coiled coil; that stretch reads LHARKRKLET…CADLEKYKEC (69 aa).

It belongs to the MND1 family.

The protein resides in the nucleus. In terms of biological role, required for proper homologous chromosome pairing and efficient cross-over and intragenic recombination during meiosis. Stimulates both dmc1- and rad51-mediated homologous strand assimilation, which is required for the resolution of meiotic double-strand breaks. The chain is Meiotic nuclear division protein 1 homolog from Xenopus laevis (African clawed frog).